A 601-amino-acid polypeptide reads, in one-letter code: Potassium voltage-gated channel subfamily A member 5 (601 aa).

Positions 1-200 are tetramerization domain; sequence MEIALVPLEN…FYQLGDEAME (200 aa). Residues 1-236 lie on the Cytoplasmic side of the membrane; the sequence is MEIALVPLEN…LIFEYPESSG (236 aa). Positions 19–93 are disordered; the sequence is GGEAGTGCSQ…DEEGEGDPAL (75 aa). Positions 65-74 are enriched in pro residues; that stretch reads RPLPPLPQDP. Residue Lys210 forms a Glycyl lysine isopeptide (Lys-Gly) (interchain with G-Cter in SUMO) linkage. A helical transmembrane segment spans residues 237-258; that stretch reads SARGIAIVSVLVILISIITFCL. At 259 to 312 the chain is on the extracellular side; sequence ETLPEFRDERELLRHPPVPHQPLGPSRGANGSGPLAPPSGPTVAPLLPRTLADP. The tract at residues 275–297 is disordered; sequence PVPHQPLGPSRGANGSGPLAPPS. A glycan (N-linked (GlcNAc...) asparagine) is linked at Asn288. Residues 313–334 form a helical membrane-spanning segment; the sequence is FFIVETTCVIWFTFELLVRFFA. Cys335 carries S-palmitoyl cysteine lipidation. Residues 335–345 lie on the Cytoplasmic side of the membrane; that stretch reads CPSKAEFSRNI. A helical membrane pass occupies residues 346–366; it reads MNIIDVVAIFPYFITLGTELA. The Extracellular portion of the chain corresponds to 367 to 383; the sequence is EQPGGGGGGQNGQQAMS. Residues 384–404 traverse the membrane as a helical; Voltage-sensor segment; it reads LAILRVIRLVRVFRIFKLSRH. Topologically, residues 405–419 are cytoplasmic; it reads SKGLQILGKTLQASM. The S4-S5 linker stretch occupies residues 406–419; that stretch reads KGLQILGKTLQASM. A helical membrane pass occupies residues 420–441; the sequence is RELGLLIFFLFIGVILFSSAVY. The Extracellular segment spans residues 442–455; it reads FAEADNQETHFSSI. Residues 456–467 constitute an intramembrane region (helical); that stretch reads PDAFWWAVVTMT. The Selectivity filter signature appears at 468 to 473; sequence TVGYGD. An intramembrane segment occupies 468 to 475; it reads TVGYGDMR. The Extracellular segment spans residues 476–482; that stretch reads PVTVGGK. A helical membrane pass occupies residues 483–511; the sequence is IVGSLCAIAGVLTIALPVPVIVSNFNYFY. The Cytoplasmic portion of the chain corresponds to 512-601; sequence HRETDHEEQA…CLDTSRETDL (90 aa). The tract at residues 521-545 is disordered; the sequence is AALKEEQGSQSHGTGLDSGGPRKAS. Lys524 participates in a covalent cross-link: Glycyl lysine isopeptide (Lys-Gly) (interchain with G-Cter in SUMO). The PDZ-binding signature appears at 599–601; sequence TDL.

Belongs to the potassium channel family. A (Shaker) (TC 1.A.1.2) subfamily. Kv1.5/KCNA5 sub-subfamily. As to quaternary structure, homotetramer and heterotetramer of potassium channel proteins. Interacts with DLG1, which enhances channel currents. Forms a ternary complex with DLG1 and CAV3. Interacts with KCNAB1. Interacts with UBE2I. Interacts with XIRP2; the interaction is required for normal action potential configuration in the heart. Glycosylated. In terms of processing, sumoylated on Lys-210, and Lys-524, preferentially with SUMO3. Sumoylation regulates the voltage sensitivity of the channel.

It is found in the cell membrane. The catalysed reaction is K(+)(in) = K(+)(out). Voltage-gated potassium channel that mediates transmembrane potassium transport in excitable membranes. Forms tetrameric potassium-selective channels through which potassium ions pass in accordance with their electrochemical gradient. The channel alternates between opened and closed conformations in response to the voltage difference across the membrane. Can form functional homotetrameric channels and heterotetrameric channels that contain variable proportions of KCNA1, KCNA2, KCNA4, KCNA5, and possibly other family members as well; channel properties depend on the type of alpha subunits that are part of the channel. Channel properties are modulated by cytoplasmic beta subunits that regulate the subcellular location of the alpha subunits and promote rapid inactivation. Homotetrameric channels display rapid activation and slow inactivation. Required for normal electrical conduction including formation of the infranodal ventricular conduction system and normal action potential configuration, as a result of its interaction with XIRP2. May play a role in regulating the secretion of insulin in normal pancreatic islets. In Mustela putorius furo (European domestic ferret), this protein is Potassium voltage-gated channel subfamily A member 5 (KCNA5).